We begin with the raw amino-acid sequence, 274 residues long: Exosome complex component Rrp42 (274 aa).

It belongs to the RNase PH family. Rrp42 subfamily. Component of the archaeal exosome complex. Forms a hexameric ring-like arrangement composed of 3 Rrp41-Rrp42 heterodimers. The hexameric ring associates with a trimer of Rrp4 and/or Csl4 subunits.

The protein resides in the cytoplasm. In terms of biological role, non-catalytic component of the exosome, which is a complex involved in RNA degradation. Contributes to the structuring of the Rrp41 active site. This is Exosome complex component Rrp42 from Pyrobaculum aerophilum (strain ATCC 51768 / DSM 7523 / JCM 9630 / CIP 104966 / NBRC 100827 / IM2).